The primary structure comprises 125 residues: Small ribosomal subunit protein bS6m (125 aa).

Belongs to the bacterial ribosomal protein bS6 family. Component of the mitochondrial ribosome small subunit (28S) which comprises a 12S rRNA and about 30 distinct proteins.

The protein resides in the mitochondrion. In Mus musculus (Mouse), this protein is Small ribosomal subunit protein bS6m (Mrps6).